A 201-amino-acid polypeptide reads, in one-letter code: Small ribosomal subunit protein uS4c (201 aa).

A disordered region spans residues 15-44; that stretch reads LGALPGLTNKRPRAGSDLRNQSRSGKKSQY. In terms of domain architecture, S4 RNA-binding spans 89 to 149; it reads MRLDNILFRL…DEQNSRALIQ (61 aa).

Belongs to the universal ribosomal protein uS4 family. In terms of assembly, part of the 30S ribosomal subunit. Contacts protein S5. The interaction surface between S4 and S5 is involved in control of translational fidelity.

It localises to the plastid. It is found in the chloroplast. Its function is as follows. One of the primary rRNA binding proteins, it binds directly to 16S rRNA where it nucleates assembly of the body of the 30S subunit. With S5 and S12 plays an important role in translational accuracy. The chain is Small ribosomal subunit protein uS4c (rps4) from Daucus carota (Wild carrot).